A 116-amino-acid chain; its full sequence is Large ribosomal subunit protein bL20 (116 aa).

It belongs to the bacterial ribosomal protein bL20 family.

Its function is as follows. Binds directly to 23S ribosomal RNA and is necessary for the in vitro assembly process of the 50S ribosomal subunit. It is not involved in the protein synthesizing functions of that subunit. The protein is Large ribosomal subunit protein bL20 of Synechococcus elongatus (strain ATCC 33912 / PCC 7942 / FACHB-805) (Anacystis nidulans R2).